Reading from the N-terminus, the 615-residue chain is ATP-dependent zinc metalloprotease FtsH 2 (615 aa).

The Cytoplasmic segment spans residues methionine 1 to asparagine 7. A helical transmembrane segment spans residues phenylalanine 8–serine 28. At arginine 29–threonine 99 the chain is on the periplasmic side. A helical transmembrane segment spans residues phenylalanine 100–tyrosine 120. Over phenylalanine 121–valine 615 the chain is Cytoplasmic. Residue glycine 195–threonine 202 coordinates ATP. Histidine 418 contributes to the Zn(2+) binding site. Glutamate 419 is an active-site residue. Zn(2+)-binding residues include histidine 422 and aspartate 495.

The protein in the central section; belongs to the AAA ATPase family. This sequence in the C-terminal section; belongs to the peptidase M41 family. As to quaternary structure, homohexamer. The cofactor is Zn(2+).

It is found in the cell inner membrane. Functionally, acts as a processive, ATP-dependent zinc metallopeptidase for both cytoplasmic and membrane proteins. Plays a role in the quality control of integral membrane proteins. The sequence is that of ATP-dependent zinc metalloprotease FtsH 2 from Bdellovibrio bacteriovorus (strain ATCC 15356 / DSM 50701 / NCIMB 9529 / HD100).